The chain runs to 395 residues: Protein BUR2 (395 aa).

2 disordered regions span residues 1 to 31 and 372 to 395; these read MSATSSSGDVKKFQAVPKPTSNASPPPASSG and AKQESMKRKAKDPIRTPDAKKPKI. S24 carries the phosphoserine modification.

As to quaternary structure, belongs to the BUR kinase complex composed of SGV1/BUR1 and BUR2. Interacts with SGV1.

The protein localises to the nucleus. Functionally, component of the BUR kinase complex involved in transcription regulation. This complex phosphorylates 'Ser-120' of the UBC2/RAD6 ubiquitin-conjugating enzyme (E2), leading to monoubiquitination of histone H2B, the localization of the PAF1 complex to the chromatin, and the silencing of telomeric-associated genes. Also required for histone H3 'Lys-4' trimethylation. May phosphorylate the 'Ser-5' of the RBP1 carboxy-terminal domain (CTD) repeats. Necessary for the recovery from pheromone-induced growth arrest in the cell cycle G1 phase. Also required for vegetative growth itself. The kinase activity of the complex requires the presence of BUR2. Overexpression of BUR2 interferes with mitotic chromosome segregation. The protein is Protein BUR2 (BUR2) of Saccharomyces cerevisiae (strain ATCC 204508 / S288c) (Baker's yeast).